Reading from the N-terminus, the 274-residue chain is Large ribosomal subunit protein uL2 (274 aa).

The disordered stretch occupies residues 223-274; the sequence is VAMNPVDHPHGGGEGRTSGGRHPVTPWGVPTKGYKTRSNKRTDKYIVRRRNK.

The protein belongs to the universal ribosomal protein uL2 family. In terms of assembly, part of the 50S ribosomal subunit. Forms a bridge to the 30S subunit in the 70S ribosome.

In terms of biological role, one of the primary rRNA binding proteins. Required for association of the 30S and 50S subunits to form the 70S ribosome, for tRNA binding and peptide bond formation. It has been suggested to have peptidyltransferase activity; this is somewhat controversial. Makes several contacts with the 16S rRNA in the 70S ribosome. In Shewanella oneidensis (strain ATCC 700550 / JCM 31522 / CIP 106686 / LMG 19005 / NCIMB 14063 / MR-1), this protein is Large ribosomal subunit protein uL2.